The following is a 416-amino-acid chain: Putative competence-damage inducible protein (416 aa).

This sequence belongs to the CinA family.

In Bacillus subtilis (strain 168), this protein is Putative competence-damage inducible protein.